The chain runs to 389 residues: Phospho-N-acetylmuramoyl-pentapeptide-transferase (389 aa).

10 consecutive transmembrane segments (helical) span residues 25 to 45, 73 to 93, 97 to 117, 135 to 155, 190 to 210, 222 to 242, 259 to 279, 287 to 307, 311 to 331, and 366 to 386; these read RAVM…PAVI, TMGG…WADL, FIWI…VDDY, FWQS…VSEA, ISYP…IVGA, GLVI…AYVM, AGEL…FLWF, FMGD…AVIV, IVLF…MLQV, and QVVV…LSTL.

It belongs to the glycosyltransferase 4 family. MraY subfamily. The cofactor is Mg(2+).

It is found in the cell inner membrane. It carries out the reaction UDP-N-acetyl-alpha-D-muramoyl-L-alanyl-gamma-D-glutamyl-meso-2,6-diaminopimeloyl-D-alanyl-D-alanine + di-trans,octa-cis-undecaprenyl phosphate = di-trans,octa-cis-undecaprenyl diphospho-N-acetyl-alpha-D-muramoyl-L-alanyl-D-glutamyl-meso-2,6-diaminopimeloyl-D-alanyl-D-alanine + UMP. The protein operates within cell wall biogenesis; peptidoglycan biosynthesis. In terms of biological role, catalyzes the initial step of the lipid cycle reactions in the biosynthesis of the cell wall peptidoglycan: transfers peptidoglycan precursor phospho-MurNAc-pentapeptide from UDP-MurNAc-pentapeptide onto the lipid carrier undecaprenyl phosphate, yielding undecaprenyl-pyrophosphoryl-MurNAc-pentapeptide, known as lipid I. The protein is Phospho-N-acetylmuramoyl-pentapeptide-transferase of Paraburkholderia xenovorans (strain LB400).